Reading from the N-terminus, the 100-residue chain is Small ribosomal subunit protein uS14c (100 aa).

The segment at 1-22 (MARKGLIQRENKRQKLEQKYHS) is disordered. The segment covering 7-20 (IQRENKRQKLEQKY) has biased composition (basic and acidic residues).

This sequence belongs to the universal ribosomal protein uS14 family. Part of the 30S ribosomal subunit.

The protein resides in the plastid. It is found in the chloroplast. In terms of biological role, binds 16S rRNA, required for the assembly of 30S particles. This is Small ribosomal subunit protein uS14c from Daucus carota (Wild carrot).